A 337-amino-acid polypeptide reads, in one-letter code: Protein-methionine-sulfoxide reductase catalytic subunit MsrP (337 aa).

A signal peptide (tat-type signal) is located at residues 1 to 54 (MLIKLPRSSECKASEITPEGIYLSRRTLLGGSLAGLALGALPGGVGAAQMSRYA). Residues Asn94, 97 to 98 (YE), Cys152, Thr187, Asn237, Arg242, and 253 to 255 (SIK) each bind Mo-molybdopterin.

Belongs to the MsrP family. In terms of assembly, heterodimer of a catalytic subunit (MsrP) and a heme-binding subunit (MsrQ). Requires Mo-molybdopterin as cofactor. In terms of processing, predicted to be exported by the Tat system. The position of the signal peptide cleavage has not been experimentally proven.

Its subcellular location is the periplasm. The enzyme catalyses L-methionyl-[protein] + a quinone + H2O = L-methionyl-(S)-S-oxide-[protein] + a quinol. It carries out the reaction L-methionyl-[protein] + a quinone + H2O = L-methionyl-(R)-S-oxide-[protein] + a quinol. Part of the MsrPQ system that repairs oxidized periplasmic proteins containing methionine sulfoxide residues (Met-O), using respiratory chain electrons. Thus protects these proteins from oxidative-stress damage caused by reactive species of oxygen and chlorine generated by the host defense mechanisms. MsrPQ is essential for the maintenance of envelope integrity under bleach stress, rescuing a wide series of structurally unrelated periplasmic proteins from methionine oxidation. The catalytic subunit MsrP is non-stereospecific, being able to reduce both (R-) and (S-) diastereoisomers of methionine sulfoxide. This is Protein-methionine-sulfoxide reductase catalytic subunit MsrP from Pseudomonas putida (strain ATCC 47054 / DSM 6125 / CFBP 8728 / NCIMB 11950 / KT2440).